A 366-amino-acid chain; its full sequence is Putative actin-9 (366 aa).

Belongs to the actin family. Polymerization of globular actin (G-actin) leads to a structural filament (F-actin) in the form of a two-stranded helix. The binding of profilin to monomeric G-actin cause the sequestration of actin into profilactin complexes, and prevents the polymerization.

It is found in the cytoplasm. The protein resides in the cytoskeleton. Functionally, actins are highly conserved proteins that are involved in various types of cell motility and are ubiquitously expressed in all eukaryotic cells. Essential component of cell cytoskeleton; plays an important role in cytoplasmic streaming, cell shape determination, cell division, organelle movement and extension growth. The polypeptide is Putative actin-9 (ACT9) (Arabidopsis thaliana (Mouse-ear cress)).